Consider the following 351-residue polypeptide: UDP-3-O-acylglucosamine N-acyltransferase (351 aa).

The active-site Proton acceptor is His-240.

Belongs to the transferase hexapeptide repeat family. LpxD subfamily. As to quaternary structure, homotrimer.

It catalyses the reaction a UDP-3-O-[(3R)-3-hydroxyacyl]-alpha-D-glucosamine + a (3R)-hydroxyacyl-[ACP] = a UDP-2-N,3-O-bis[(3R)-3-hydroxyacyl]-alpha-D-glucosamine + holo-[ACP] + H(+). The protein operates within bacterial outer membrane biogenesis; LPS lipid A biosynthesis. In terms of biological role, catalyzes the N-acylation of UDP-3-O-acylglucosamine using 3-hydroxyacyl-ACP as the acyl donor. Is involved in the biosynthesis of lipid A, a phosphorylated glycolipid that anchors the lipopolysaccharide to the outer membrane of the cell. In Pseudomonas syringae pv. syringae (strain B728a), this protein is UDP-3-O-acylglucosamine N-acyltransferase.